The sequence spans 650 residues: Threonine--tRNA ligase (650 aa).

The region spanning 3-65 is the TGS domain; sequence DLVKVTLPDG…ERDARLEIVT (63 aa). Residues 248-548 form a catalytic region; sequence DHRRLGPQLG…LVEHYAGAFP (301 aa). Residues Cys-349, His-400, and His-525 each contribute to the Zn(2+) site.

This sequence belongs to the class-II aminoacyl-tRNA synthetase family. In terms of assembly, homodimer. Requires Zn(2+) as cofactor.

Its subcellular location is the cytoplasm. The enzyme catalyses tRNA(Thr) + L-threonine + ATP = L-threonyl-tRNA(Thr) + AMP + diphosphate + H(+). Its function is as follows. Catalyzes the attachment of threonine to tRNA(Thr) in a two-step reaction: L-threonine is first activated by ATP to form Thr-AMP and then transferred to the acceptor end of tRNA(Thr). Also edits incorrectly charged L-seryl-tRNA(Thr). This Anaeromyxobacter dehalogenans (strain 2CP-1 / ATCC BAA-258) protein is Threonine--tRNA ligase.